The sequence spans 498 residues: Glycerol kinase (498 aa).

ADP is bound at residue T11. 3 residues coordinate ATP: T11, S12, and S13. T11 provides a ligand contact to sn-glycerol 3-phosphate. R15 is a binding site for ADP. Sn-glycerol 3-phosphate contacts are provided by R81, E82, Y133, and D242. Residues R81, E82, Y133, D242, and Q243 each contribute to the glycerol site. Positions 264 and 307 each coordinate ADP. ATP-binding residues include T264, G307, Q311, and G412. G412 and N416 together coordinate ADP.

This sequence belongs to the FGGY kinase family.

It catalyses the reaction glycerol + ATP = sn-glycerol 3-phosphate + ADP + H(+). It functions in the pathway polyol metabolism; glycerol degradation via glycerol kinase pathway; sn-glycerol 3-phosphate from glycerol: step 1/1. Inhibited by fructose 1,6-bisphosphate (FBP). Key enzyme in the regulation of glycerol uptake and metabolism. Catalyzes the phosphorylation of glycerol to yield sn-glycerol 3-phosphate. This is Glycerol kinase from Acidovorax sp. (strain JS42).